The following is an 896-amino-acid chain: Translation initiation factor IF-2 (896 aa).

The tract at residues 46-315 (LAHLNRQHGG…FNKPAQPVER (270 aa)) is disordered. Basic and acidic residues predominate over residues 99-247 (SASEEQEREE…RKQQEKEDVH (149 aa)). Over residues 269 to 278 (SRKRGKKRRR) the composition is skewed to basic residues. Positions 279 to 288 (KDEESDDTPR) are enriched in basic and acidic residues. The tr-type G domain maps to 396-565 (PRAPVVTVMG…LLQSEVLDLR (170 aa)). Residues 405–412 (GHVDHGKT) are G1. 405–412 (GHVDHGKT) is a GTP binding site. The G2 stretch occupies residues 430–434 (GITQH). Residues 451-454 (DTPG) form a G3 region. GTP is bound by residues 451 to 455 (DTPGH) and 505 to 508 (NKMD). The G4 stretch occupies residues 505 to 508 (NKMD). The tract at residues 541-543 (SAH) is G5.

Belongs to the TRAFAC class translation factor GTPase superfamily. Classic translation factor GTPase family. IF-2 subfamily.

It is found in the cytoplasm. One of the essential components for the initiation of protein synthesis. Protects formylmethionyl-tRNA from spontaneous hydrolysis and promotes its binding to the 30S ribosomal subunits. Also involved in the hydrolysis of GTP during the formation of the 70S ribosomal complex. The chain is Translation initiation factor IF-2 from Idiomarina loihiensis (strain ATCC BAA-735 / DSM 15497 / L2-TR).